The sequence spans 717 residues: F-box only protein 42 (717 aa).

Residues 1–30 (MASSSDSEDDSVMAVDQEETALEGTMEQDE) are compositionally biased toward acidic residues. Residues 1–34 (MASSSDSEDDSVMAVDQEETALEGTMEQDEDPHP) are disordered. The F-box domain occupies 44-93 (NRSMSELPEEVLEYILSFLSPYQEHKTAALVCKQWYRLIKGVAHQCYHGF). Kelch repeat units lie at residues 132–184 (SMYV…VYKD), 186–242 (LVLF…VIGD), 244–293 (MIVF…VIDD), and 295–342 (TLLI…LWCH). Residues 361-452 (RAPLSPSLNS…NLSPGTVAVG (92 aa)) form a disordered region. Over residues 363–376 (PLSPSLNSRPSPIS) the composition is skewed to low complexity. 2 positions are modified to phosphoserine: Ser365 and Ser373. Thr378 carries the phosphothreonine modification. Residues 416-426 (QRQTPSGSREG) are compositionally biased toward polar residues. The residue at position 552 (Ser552) is a Phosphoserine. Over residues 570-595 (GPSASAALSPPLGSSPSSPGSQSLSS) the composition is skewed to low complexity. A disordered region spans residues 570–632 (GPSASAALSP…HHPPQSLNVG (63 aa)).

In terms of assembly, component of some SCF complex, composed of CUL1, SKP1, RBX1 and FBXO42. Interacts (via the kelch domain) with p53/TP53; interaction is direct.

Substrate-recognition component of some SCF (SKP1-CUL1-F-box protein)-type E3 ubiquitin ligase complex. Specifically recognizes p53/TP53, promoting its ubiquitination and degradation. This chain is F-box only protein 42 (Fbxo42), found in Mus musculus (Mouse).